A 505-amino-acid polypeptide reads, in one-letter code: uncharacterized protein (505 aa).

Positions 461-480 (RTDVHPGNSDDEGAYSSADS) are disordered.

It to M.jannaschii MJ0787.

This is an uncharacterized protein from Methanothermobacter thermautotrophicus (strain ATCC 29096 / DSM 1053 / JCM 10044 / NBRC 100330 / Delta H) (Methanobacterium thermoautotrophicum).